Reading from the N-terminus, the 338-residue chain is Protein FosB (338 aa).

2 disordered regions span residues 1-54 and 80-162; these read MFQA…PGSF and AQSQ…RVRR. Polar residues predominate over residues 13-31; that stretch reads SRCSSSPSAESQYLSSVDS. Phosphoserine is present on Ser27. Positions 113–124 are enriched in gly residues; sequence SSGGASGSGGPS. The segment covering 125 to 137 has biased composition (low complexity); it reads TSGTTSGPGPARP. Positions 155 to 218 constitute a bZIP domain; the sequence is EEKRRVRRER…ERLEFVLVAH (64 aa). Positions 157-182 are basic motif; that stretch reads KRRVRRERNKLAAAKCRNRRRELTDR. Residues 183-211 form a leucine-zipper region; it reads LQAETDQLEEEKAELESEIAELQKEKERL. 2 disordered regions span residues 222–271 and 315–338; these read CKIP…TSQD and AGTQ…LLAL. The segment covering 256–265 has biased composition (pro residues); it reads LPPPPAPPLP. Positions 318-338 are enriched in polar residues; sequence QRPSGSDQPTDPLNSPSLLAL.

Belongs to the bZIP family. Fos subfamily. In terms of assembly, heterodimer; binds to DNA as heterodimer. Component of an AP-1 transcription factor complex; composed of FOS-JUN heterodimers. As part of the AP-1 transcription factor complex, forms heterodimers with JUN, JUNB or JUND, thereby binding to the AP-1 consensus sequence and stimulating transcription. Interacts with the BAF multiprotein chromatin-remodeling complex subunits SMARCB1 and SMARCD1. Interacts with ARID1A and JUN. In terms of processing, phosphorylated.

The protein localises to the nucleus. In terms of biological role, heterodimerizes with proteins of the JUN family to form an AP-1 transcription factor complex, thereby enhancing their DNA binding activity to an AP-1 consensus sequence 5'-TGA[GC]TCA-3' and enhancing their transcriptional activity. Exhibits transactivation activity in vitro. As part of the AP-1 complex, facilitates enhancer selection together with cell-type-specific transcription factors by collaboratively binding to nucleosomal enhancers and recruiting the SWI/SNF (BAF) chromatin remodeling complex to establish accessible chromatin. Together with JUN, plays a role in activation-induced cell death of T cells by binding to the AP-1 promoter site of FASLG/CD95L, and inducing its transcription in response to activation of the TCR/CD3 signaling pathway. Involved in the display of nurturing behavior towards newborns. May play a role in neurogenesis in the hippocampus and in learning and memory-related tasks by regulating the expression of various genes involved in neurogenesis, depression and epilepsy. Implicated in behavioral responses related to morphine reward and spatial memory. This is Protein FosB (FOSB) from Canis lupus familiaris (Dog).